A 214-amino-acid chain; its full sequence is dITP/XTP pyrophosphatase (214 aa).

13 to 18 (SHNAGK) contacts substrate. 2 residues coordinate Mg(2+): Asp45 and Asp74. The Proton acceptor role is filled by Asp74. Residues Ser75, 163-166 (FGYD), Lys186, and 199-200 (HR) contribute to the substrate site.

It belongs to the HAM1 NTPase family. As to quaternary structure, homodimer. It depends on Mg(2+) as a cofactor.

It catalyses the reaction XTP + H2O = XMP + diphosphate + H(+). The enzyme catalyses dITP + H2O = dIMP + diphosphate + H(+). The catalysed reaction is ITP + H2O = IMP + diphosphate + H(+). In terms of biological role, pyrophosphatase that catalyzes the hydrolysis of nucleoside triphosphates to their monophosphate derivatives, with a high preference for the non-canonical purine nucleotides XTP (xanthosine triphosphate), dITP (deoxyinosine triphosphate) and ITP. Seems to function as a house-cleaning enzyme that removes non-canonical purine nucleotides from the nucleotide pool, thus preventing their incorporation into DNA/RNA and avoiding chromosomal lesions. This is dITP/XTP pyrophosphatase from Rhizobium meliloti (strain 1021) (Ensifer meliloti).